A 58-amino-acid chain; its full sequence is Ferredoxin-2 (58 aa).

4Fe-4S ferredoxin-type domains lie at 2–27 and 30–58; these read IEVN…MNEE and KAVV…IVRS. Cys-8 is a binding site for [3Fe-4S] cluster. Cys-11 carries the cysteine methyl disulfide modification. Cys-14 is a binding site for [3Fe-4S] cluster. Cys-18 and Cys-42 form a disulfide bridge. Cys-50 contacts [3Fe-4S] cluster.

As to quaternary structure, homodimer (ferredoxin I) or homotetramer (ferredoxin II). [3Fe-4S] cluster is required as a cofactor. The cofactor is [4Fe-4S] cluster.

Functionally, ferredoxins are iron-sulfur proteins that transfer electrons in a wide variety of metabolic reactions. The sequence is that of Ferredoxin-2 from Megalodesulfovibrio gigas (Desulfovibrio gigas).